The sequence spans 203 residues: Arcadin-2 (203 aa).

As to quaternary structure, interacts with crenactin.

The protein localises to the cytoplasm. The protein resides in the cytoskeleton. Part of an actin-like archaeal cytoskeleton. Prevents polymerization of crenactin filaments by binding its C-terminus into crenactin's hydrophobic groove. May act by competing with the D-loop of the following crenactin subunit for the hydrophobic groove. The protein is Arcadin-2 of Pyrobaculum calidifontis (strain DSM 21063 / JCM 11548 / VA1).